The chain runs to 127 residues: Glycine cleavage system H protein (127 aa).

Positions 24–105 constitute a Lipoyl-binding domain; the sequence is TLTIGITDLA…AYDAWLFKIK (82 aa). At lysine 65 the chain carries N6-lipoyllysine.

This sequence belongs to the GcvH family. In terms of assembly, the glycine cleavage system is composed of four proteins: P, T, L and H. It depends on (R)-lipoate as a cofactor.

Functionally, the glycine cleavage system catalyzes the degradation of glycine. The H protein shuttles the methylamine group of glycine from the P protein to the T protein. The chain is Glycine cleavage system H protein from Ralstonia nicotianae (strain ATCC BAA-1114 / GMI1000) (Ralstonia solanacearum).